The chain runs to 495 residues: DUF21 domain-containing protein At4g14230 (495 aa).

The Extracellular segment spans residues 1 to 42 (MHPINAVVAARMLAGISQSNALQSEAIPFGSLEWITYAGISC). The CNNM transmembrane domain maps to 30–212 (GSLEWITYAG…GKGGELTHDE (183 aa)). Residues 43–63 (FLVLFAGIMSGLTLGLMSLGL) form a helical membrane-spanning segment. The Cytoplasmic segment spans residues 64-92 (VELEILQRSGTPKEKKQSAAIFPVVQKQH). A helical membrane pass occupies residues 93–113 (QLLVTLLLFNALAMEGLPIYL). Topologically, residues 114–120 (DKIFNEY) are extracellular. Residues 121 to 141 (VAIILSVTFVLFVGEVIPQAI) form a helical membrane-spanning segment. Residues 142-146 (CTRYG) are Cytoplasmic-facing. The chain crosses the membrane as a helical span at residues 147–167 (LAVGANLVWLVRILMVLSYPI). The Extracellular segment spans residues 168–495 (SFPIAKMLDW…TMTGPPQGNN (328 aa)). CBS domains lie at 231 to 291 (MTPI…TGTL), 296 to 356 (GIRR…NNSE), and 357 to 426 (LTAP…IVDE). Positions 330-354 (KGKSKGHPSTLHEENSGESNVSSNN) are disordered. Residue asparagine 349 is glycosylated (N-linked (GlcNAc...) asparagine). Serine 352 carries the phosphoserine modification. Asparagine 353 carries N-linked (GlcNAc...) asparagine glycosylation. Residues 455–495 (SGRRLLGPKGSGGPKTPKASSTPKPDDKLMGTMTGPPQGNN) form a disordered region. A compositionally biased stretch (low complexity) spans 456–477 (GRRLLGPKGSGGPKTPKASSTP).

The protein resides in the membrane. This is DUF21 domain-containing protein At4g14230 (CBSDUF2) from Arabidopsis thaliana (Mouse-ear cress).